The sequence spans 195 residues: dTTP/UTP pyrophosphatase (195 aa).

Residue D70 is the Proton acceptor of the active site.

Belongs to the Maf family. YhdE subfamily. Requires a divalent metal cation as cofactor.

Its subcellular location is the cytoplasm. The enzyme catalyses dTTP + H2O = dTMP + diphosphate + H(+). It catalyses the reaction UTP + H2O = UMP + diphosphate + H(+). Nucleoside triphosphate pyrophosphatase that hydrolyzes dTTP and UTP. May have a dual role in cell division arrest and in preventing the incorporation of modified nucleotides into cellular nucleic acids. The protein is dTTP/UTP pyrophosphatase of Photorhabdus laumondii subsp. laumondii (strain DSM 15139 / CIP 105565 / TT01) (Photorhabdus luminescens subsp. laumondii).